The primary structure comprises 387 residues: Galactokinase (387 aa).

Glu-33–Asp-36 is a binding site for substrate. ATP contacts are provided by residues Ser-67 and Gly-123–Ser-129. Residues Ser-129 and Glu-161 each contribute to the Mg(2+) site. Asp-173 serves as the catalytic Proton acceptor. Substrate is bound at residue Tyr-223.

Belongs to the GHMP kinase family. GalK subfamily.

Its subcellular location is the cytoplasm. It carries out the reaction alpha-D-galactose + ATP = alpha-D-galactose 1-phosphate + ADP + H(+). Its pathway is carbohydrate metabolism; galactose metabolism. Catalyzes the transfer of the gamma-phosphate of ATP to D-galactose to form alpha-D-galactose-1-phosphate (Gal-1-P). The protein is Galactokinase of Lacticaseibacillus casei (Lactobacillus casei).